The following is a 162-amino-acid chain: D-aminoacyl-tRNA deacylase (162 aa).

The short motif at 143 to 144 is the Gly-cisPro motif, important for rejection of L-amino acids element; sequence GP.

The protein belongs to the DTD family. As to quaternary structure, homodimer.

Its subcellular location is the cytoplasm. The catalysed reaction is glycyl-tRNA(Ala) + H2O = tRNA(Ala) + glycine + H(+). The enzyme catalyses a D-aminoacyl-tRNA + H2O = a tRNA + a D-alpha-amino acid + H(+). An aminoacyl-tRNA editing enzyme that deacylates mischarged D-aminoacyl-tRNAs. Also deacylates mischarged glycyl-tRNA(Ala), protecting cells against glycine mischarging by AlaRS. Acts via tRNA-based rather than protein-based catalysis; rejects L-amino acids rather than detecting D-amino acids in the active site. By recycling D-aminoacyl-tRNA to D-amino acids and free tRNA molecules, this enzyme counteracts the toxicity associated with the formation of D-aminoacyl-tRNA entities in vivo and helps enforce protein L-homochirality. The polypeptide is D-aminoacyl-tRNA deacylase (Nitratidesulfovibrio vulgaris (strain ATCC 29579 / DSM 644 / CCUG 34227 / NCIMB 8303 / VKM B-1760 / Hildenborough) (Desulfovibrio vulgaris)).